The chain runs to 206 residues: Small ribosomal subunit protein uS4 (206 aa).

An S4 RNA-binding domain is found at 98-155 (TRLDNVVYRLGWALSRAQARQIVSHGKIAVNGKRVNIPSYNLKPGDVVELLDKDLIPV).

The protein belongs to the universal ribosomal protein uS4 family. Part of the 30S ribosomal subunit. Contacts protein S5. The interaction surface between S4 and S5 is involved in control of translational fidelity.

In terms of biological role, one of the primary rRNA binding proteins, it binds directly to 16S rRNA where it nucleates assembly of the body of the 30S subunit. Functionally, with S5 and S12 plays an important role in translational accuracy. The chain is Small ribosomal subunit protein uS4 from Dictyoglomus turgidum (strain DSM 6724 / Z-1310).